We begin with the raw amino-acid sequence, 242 residues long: Ubiquinone biosynthesis O-methyltransferase (242 aa).

Residues Arg36, Gly56, Asp77, and Met130 each coordinate S-adenosyl-L-methionine.

This sequence belongs to the methyltransferase superfamily. UbiG/COQ3 family.

It catalyses the reaction a 3-demethylubiquinol + S-adenosyl-L-methionine = a ubiquinol + S-adenosyl-L-homocysteine + H(+). It carries out the reaction a 3-(all-trans-polyprenyl)benzene-1,2-diol + S-adenosyl-L-methionine = a 2-methoxy-6-(all-trans-polyprenyl)phenol + S-adenosyl-L-homocysteine + H(+). It participates in cofactor biosynthesis; ubiquinone biosynthesis. O-methyltransferase that catalyzes the 2 O-methylation steps in the ubiquinone biosynthetic pathway. The chain is Ubiquinone biosynthesis O-methyltransferase from Pasteurella multocida (strain Pm70).